The following is a 757-amino-acid chain: Probable phospholipase C20G8.02, mitochondrial (757 aa).

Residues 1 to 13 (MILYIVLPFYVRT) constitute a mitochondrion transit peptide. A disordered region spans residues 289 to 330 (ESNSKPSTPVPTEELTSTTLLNDSSDPSDNFTPSNTESTIDL). Positions 302-329 (ELTSTTLLNDSSDPSDNFTPSNTESTID) are enriched in polar residues. Residue Ser524 is part of the active site. Positions 547–757 (LDFPVANFFA…LAHFILTQLL (211 aa)) constitute a DDHD domain.

Belongs to the PA-PLA1 family.

Its subcellular location is the mitochondrion. In terms of biological role, probable phospholipase that hydrolyzes phosphatidic acid. The sequence is that of Probable phospholipase C20G8.02, mitochondrial from Schizosaccharomyces pombe (strain 972 / ATCC 24843) (Fission yeast).